The sequence spans 354 residues: Uroporphyrinogen decarboxylase (354 aa).

Residues 27–31 (RQAGR), Asp-77, Tyr-154, Thr-209, and His-327 each bind substrate.

It belongs to the uroporphyrinogen decarboxylase family. In terms of assembly, homodimer.

The protein localises to the cytoplasm. It carries out the reaction uroporphyrinogen III + 4 H(+) = coproporphyrinogen III + 4 CO2. Its pathway is porphyrin-containing compound metabolism; protoporphyrin-IX biosynthesis; coproporphyrinogen-III from 5-aminolevulinate: step 4/4. Functionally, catalyzes the decarboxylation of four acetate groups of uroporphyrinogen-III to yield coproporphyrinogen-III. The protein is Uroporphyrinogen decarboxylase of Escherichia coli O81 (strain ED1a).